The sequence spans 239 residues: Serine protease SplC (239 aa).

An N-terminal signal peptide occupies residues 1 to 36 (MNKNIVIKSMAALAILTSVTGINAAVVEETQQIANA). Active-site charge relay system residues include His75, Asp113, and Ser193.

The protein belongs to the peptidase S1B family.

The protein resides in the secreted. This chain is Serine protease SplC (splC), found in Staphylococcus aureus (strain USA300 / TCH1516).